The following is a 153-amino-acid chain: Protein SprT-like (153 aa).

In terms of domain architecture, SprT-like spans 7 to 145 (QTLVEKISIV…VCGKCHGRLS (139 aa)). H67 serves as a coordination point for Zn(2+). E68 is an active-site residue. Residue H71 participates in Zn(2+) binding.

The protein belongs to the SprT family. The cofactor is Zn(2+).

The protein resides in the cytoplasm. This is Protein SprT-like from Enterococcus faecalis (strain ATCC 700802 / V583).